A 413-amino-acid chain; its full sequence is Glucose-1-phosphate adenylyltransferase (413 aa).

Alpha-D-glucose 1-phosphate-binding positions include tyrosine 102, glycine 167, 182–183 (EK), and serine 200.

It belongs to the bacterial/plant glucose-1-phosphate adenylyltransferase family. In terms of assembly, homotetramer.

The catalysed reaction is alpha-D-glucose 1-phosphate + ATP + H(+) = ADP-alpha-D-glucose + diphosphate. It functions in the pathway glycan biosynthesis; glycogen biosynthesis. Functionally, involved in the biosynthesis of ADP-glucose, a building block required for the elongation reactions to produce glycogen. Catalyzes the reaction between ATP and alpha-D-glucose 1-phosphate (G1P) to produce pyrophosphate and ADP-Glc. The sequence is that of Glucose-1-phosphate adenylyltransferase from Deinococcus geothermalis (strain DSM 11300 / CIP 105573 / AG-3a).